We begin with the raw amino-acid sequence, 197 residues long: TLE family member 5 (197 aa).

A CCN domain region spans residues 166–197 (LSALGSQTHLSKEDKNGHDGDTHQEDDGEKSD). Residues 170–197 (GSQTHLSKEDKNGHDGDTHQEDDGEKSD) are disordered. A compositionally biased stretch (basic and acidic residues) spans 175–197 (LSKEDKNGHDGDTHQEDDGEKSD). Position 196 is a phosphoserine (serine 196).

Belongs to the WD repeat Groucho/TLE family. As to quaternary structure, homooligomer and heterooligomer with other family members. Binds TCF7 and the NF-kappa-B subunit RELA. Interacts with PHF12. Interacts (via Q domain) with SIX3. Interacts with SIX6. Ubiquitinated by XIAP/BIRC4. As to expression, ubiquitously expressed in developing embryos by midgestation, a wide expression is conserved in adult. In mouse, abundantly expressed in muscle, heart and brain.

The protein resides in the nucleus. Its function is as follows. Transcriptional corepressor. Acts as a dominant repressor towards other family members. Inhibits NF-kappa-B-regulated gene expression. May be required for the initiation and maintenance of the differentiated state. Essential for the transcriptional repressor activity of SIX3 during retina and lens development. This is TLE family member 5 from Mus musculus (Mouse).